Here is a 189-residue protein sequence, read N- to C-terminus: UPF0301 protein CAB604 (189 aa).

Belongs to the UPF0301 (AlgH) family.

The protein is UPF0301 protein CAB604 of Chlamydia abortus (strain DSM 27085 / S26/3) (Chlamydophila abortus).